A 333-amino-acid chain; its full sequence is Acetyl-coenzyme A carboxylase carboxyl transferase subunit alpha (333 aa).

Positions 48 to 308 constitute a CoA carboxyltransferase C-terminal domain; the sequence is LLEQKVDALR…KEMLVEELRD (261 aa).

The protein belongs to the AccA family. As to quaternary structure, acetyl-CoA carboxylase is a heterohexamer composed of biotin carboxyl carrier protein (AccB), biotin carboxylase (AccC) and two subunits each of ACCase subunit alpha (AccA) and ACCase subunit beta (AccD).

The protein localises to the cytoplasm. The catalysed reaction is N(6)-carboxybiotinyl-L-lysyl-[protein] + acetyl-CoA = N(6)-biotinyl-L-lysyl-[protein] + malonyl-CoA. It participates in lipid metabolism; malonyl-CoA biosynthesis; malonyl-CoA from acetyl-CoA: step 1/1. In terms of biological role, component of the acetyl coenzyme A carboxylase (ACC) complex. First, biotin carboxylase catalyzes the carboxylation of biotin on its carrier protein (BCCP) and then the CO(2) group is transferred by the carboxyltransferase to acetyl-CoA to form malonyl-CoA. In Chlorobium limicola (strain DSM 245 / NBRC 103803 / 6330), this protein is Acetyl-coenzyme A carboxylase carboxyl transferase subunit alpha.